The primary structure comprises 528 residues: Glutamyl-tRNA(Gln) amidotransferase subunit A, mitochondrial (528 aa).

The active-site Charge relay system is the K76. The segment at 147–166 is disordered; that stretch reads QYREKRKQNPHSKNEDSDWL. Catalysis depends on S171, which acts as the Charge relay system. Residue S195 is the Acyl-ester intermediate of the active site.

Belongs to the amidase family. GatA subfamily. As to quaternary structure, subunit of the heterotrimeric GatCAB amidotransferase (AdT) complex, composed of A (QRSL1), B (GATB) and C (GATC) subunits.

The protein localises to the mitochondrion. The enzyme catalyses L-glutamyl-tRNA(Gln) + L-glutamine + ATP + H2O = L-glutaminyl-tRNA(Gln) + L-glutamate + ADP + phosphate + H(+). Functionally, allows the formation of correctly charged Gln-tRNA(Gln) through the transamidation of misacylated Glu-tRNA(Gln) in the mitochondria. The reaction takes place in the presence of glutamine and ATP through an activated gamma-phospho-Glu-tRNA(Gln). This chain is Glutamyl-tRNA(Gln) amidotransferase subunit A, mitochondrial, found in Macaca fascicularis (Crab-eating macaque).